Reading from the N-terminus, the 308-residue chain is Cysteine proteinase 3 (308 aa).

Residues 1-13 (MFALILFVSLACA) form the signal peptide. A propeptide spans 14–92 (NEVAFKQWAA…TSNVKAAVKA (79 aa)) (activation peptide). Intrachain disulfides connect cysteine 112-cysteine 153 and cysteine 146-cysteine 186. Residue cysteine 115 is part of the active site. Residues histidine 251 and asparagine 271 contribute to the active site.

The protein belongs to the peptidase C1 family.

It is found in the cytoplasm. The protein localises to the cytoplasmic vesicle. Its subcellular location is the phagosome. The catalysed reaction is Hydrolysis of proteins, including basement membrane collagen and azocasein. Preferential cleavage: Arg-Arg-|-Xaa in small molecule substrates including Z-Arg-Arg-|-NHMec.. Functionally, cysteine protease which may be involved in pathogenicity. This Entamoeba histolytica (strain ATCC 30459 / HM-1:IMSS / ABRM) protein is Cysteine proteinase 3.